A 197-amino-acid polypeptide reads, in one-letter code: Thymidine kinase (197 aa).

ATP is bound by residues 9–16 (AAMNAGKS) and 83–86 (DESQ). The active-site Proton acceptor is the Glu-84. The Zn(2+) site is built by Cys-141, Cys-143, Cys-178, and Cys-181.

This sequence belongs to the thymidine kinase family. In terms of assembly, homotetramer.

The protein localises to the cytoplasm. The enzyme catalyses thymidine + ATP = dTMP + ADP + H(+). The polypeptide is Thymidine kinase (Albidiferax ferrireducens (strain ATCC BAA-621 / DSM 15236 / T118) (Rhodoferax ferrireducens)).